A 98-amino-acid polypeptide reads, in one-letter code: Large ribosomal subunit protein uL23 (98 aa).

This sequence belongs to the universal ribosomal protein uL23 family. Part of the 50S ribosomal subunit. Contacts protein L29, and trigger factor when it is bound to the ribosome.

In terms of biological role, one of the early assembly proteins it binds 23S rRNA. One of the proteins that surrounds the polypeptide exit tunnel on the outside of the ribosome. Forms the main docking site for trigger factor binding to the ribosome. The polypeptide is Large ribosomal subunit protein uL23 (Borreliella afzelii (strain PKo) (Borrelia afzelii)).